Here is a 430-residue protein sequence, read N- to C-terminus: MNFVEELRWRGMIADMMPGTEEQLQKELTSAYVGIDPTADSLHIGHLVSVMMLKHFQRAGHRPIALVGGATGMIGDPSMKSAERNLLDEATLRHNQDCIKKQLAKFLDFDSDAPNAAKLVNNYDWMKGYSFLNFIRDIGKHITVNYMMAKDSVKKRLSRESSVGMSFTEFSYQLLQGYDYLYLYEHEGCRLQMGGTDQWGNITTGTELIRRTLGGEAYALTCPLITKADGGKFGKTESGNIWLDRRYTSPYKFYQFWLNVSDADAAKYIKIFTDLSQEEIAALEAEQEAAPHLRPLQKRLAKEVTVMVHSLEDYEAAVEASNILFGNSTHEALLKLDEDTLLAVFEGVPHFDISRDELAAGIKAVDLCTEKAAIFPSKGEMRKLVQSGGVSFNKEKLAEVDTVIDCSSLLDDKYLLVQRGKKNYYLLIAK.

Residue tyrosine 32 participates in L-tyrosine binding. Residues 37-46 (PTADSLHIGH) carry the 'HIGH' region motif. The L-tyrosine site is built by tyrosine 172 and glutamine 176. A 'KMSKS' region motif is present at residues 232-236 (KFGKT). Lysine 235 contributes to the ATP binding site. The S4 RNA-binding domain maps to 362 to 429 (IKAVDLCTEK…GKKNYYLLIA (68 aa)).

It belongs to the class-I aminoacyl-tRNA synthetase family. TyrS type 1 subfamily. Homodimer.

It localises to the cytoplasm. It catalyses the reaction tRNA(Tyr) + L-tyrosine + ATP = L-tyrosyl-tRNA(Tyr) + AMP + diphosphate + H(+). Catalyzes the attachment of tyrosine to tRNA(Tyr) in a two-step reaction: tyrosine is first activated by ATP to form Tyr-AMP and then transferred to the acceptor end of tRNA(Tyr). This chain is Tyrosine--tRNA ligase, found in Parabacteroides distasonis (strain ATCC 8503 / DSM 20701 / CIP 104284 / JCM 5825 / NCTC 11152).